A 161-amino-acid polypeptide reads, in one-letter code: Photosystem II extrinsic protein V (161 aa).

The signal sequence occupies residues 1–25 (MKKFFISVVFIVLLTFTTFINSATA). Positions 61, 64, 65, and 116 each coordinate heme c.

It belongs to the cytochrome c family. PsbV subfamily. PSII is composed of 1 copy each of membrane proteins PsbA, PsbB, PsbC, PsbD, PsbE, PsbF, PsbH, PsbI, PsbJ, PsbK, PsbL, PsbM, PsbT, PsbX, PsbY, PsbZ, Psb30/Ycf12, peripheral proteins PsbO, CyanoQ (PsbQ), PsbU, PsbV and a large number of cofactors. It forms dimeric complexes. Heme c is required as a cofactor.

The protein localises to the cellular thylakoid membrane. One of the extrinsic, lumenal subunits of photosystem II (PSII). PSII is a light-driven water plastoquinone oxidoreductase, using light energy to abstract electrons from H(2)O, generating a proton gradient subsequently used for ATP formation. The extrinsic proteins stabilize the structure of photosystem II oxygen-evolving complex (OEC), the ion environment of oxygen evolution and protect the OEC against heat-induced inactivation. Low-potential cytochrome c that plays a role in the OEC of PSII. The chain is Photosystem II extrinsic protein V from Trichodesmium erythraeum (strain IMS101).